Reading from the N-terminus, the 481-residue chain is F-box/FBD/LRR-repeat protein At5g18770 (481 aa).

In terms of domain architecture, F-box spans 23-69 (EDMISALPDHLLCHILIFLSTDESVLTSVLSSRWRNLWKWVPRLDLN). LRR repeat units follow at residues 126–153 (KPNV…TLSA), 159–185 (CLKL…YLED), 186–211 (VVFP…KLSL), 214–234 (DDVV…TLKR), 236–261 (VPVY…SLID), 289–314 (DELS…TISW), and 340–368 (ATMS…HFTL). One can recognise an FBD domain in the interval 378–430 (VITGFSRVLPRCLVFSLESVEMESPITEKATELKLVRYFLENSATLKKLVLLL).

The chain is F-box/FBD/LRR-repeat protein At5g18770 from Arabidopsis thaliana (Mouse-ear cress).